A 256-amino-acid chain; its full sequence is Thiazole synthase (256 aa).

K95 acts as the Schiff-base intermediate with DXP in catalysis. 1-deoxy-D-xylulose 5-phosphate-binding positions include G156, 182-183, and 204-205; these read AG and NT.

This sequence belongs to the ThiG family. In terms of assembly, homotetramer. Forms heterodimers with either ThiH or ThiS.

The protein localises to the cytoplasm. It catalyses the reaction [ThiS sulfur-carrier protein]-C-terminal-Gly-aminoethanethioate + 2-iminoacetate + 1-deoxy-D-xylulose 5-phosphate = [ThiS sulfur-carrier protein]-C-terminal Gly-Gly + 2-[(2R,5Z)-2-carboxy-4-methylthiazol-5(2H)-ylidene]ethyl phosphate + 2 H2O + H(+). It functions in the pathway cofactor biosynthesis; thiamine diphosphate biosynthesis. In terms of biological role, catalyzes the rearrangement of 1-deoxy-D-xylulose 5-phosphate (DXP) to produce the thiazole phosphate moiety of thiamine. Sulfur is provided by the thiocarboxylate moiety of the carrier protein ThiS. In vitro, sulfur can be provided by H(2)S. The polypeptide is Thiazole synthase (Shigella boydii serotype 18 (strain CDC 3083-94 / BS512)).